The following is a 163-amino-acid chain: Phosphopantetheine adenylyltransferase (163 aa).

S10 contributes to the substrate binding site. ATP-binding positions include S10–F11 and H18. Residues K42, L78, and K92 each contribute to the substrate site. ATP-binding positions include G93 to R95, E103, and H127 to S133.

This sequence belongs to the bacterial CoaD family. Homohexamer. Requires Mg(2+) as cofactor.

It is found in the cytoplasm. It carries out the reaction (R)-4'-phosphopantetheine + ATP + H(+) = 3'-dephospho-CoA + diphosphate. The protein operates within cofactor biosynthesis; coenzyme A biosynthesis; CoA from (R)-pantothenate: step 4/5. Reversibly transfers an adenylyl group from ATP to 4'-phosphopantetheine, yielding dephospho-CoA (dPCoA) and pyrophosphate. The sequence is that of Phosphopantetheine adenylyltransferase from Clavibacter michiganensis subsp. michiganensis (strain NCPPB 382).